The following is a 108-amino-acid chain: Cell division topological specificity factor (108 aa).

Belongs to the MinE family.

In terms of biological role, prevents the cell division inhibition by proteins MinC and MinD at internal division sites while permitting inhibition at polar sites. This ensures cell division at the proper site by restricting the formation of a division septum at the midpoint of the long axis of the cell. This Prochlorococcus marinus (strain MIT 9215) protein is Cell division topological specificity factor.